A 198-amino-acid polypeptide reads, in one-letter code: MLLNDREIKELIDKKEIIIEPFSYEQIQPASIDLRLGNRFRIFRKGEIEVIDPKDFKDELIKIEQDENKIIEKYKYTDVIITENPFIIYPGDFVLASIYEYIKLPRYIAAQLHGKSSIARLGLIIHTSAGWIDPGYEGHLTLEIFNTNNVPIKLYPKMKIAQLQLFRINPVERDYKEKGGKYYKEKGATSSEIWKDFI.

DCTP contacts are provided by residues 115-120 (KSSIAR), D133, 141-143 (TLE), Q162, Y175, and K184. The active-site Proton donor/acceptor is the E143.

It belongs to the dCTP deaminase family. In terms of assembly, homotrimer.

It carries out the reaction dCTP + 2 H2O = dUMP + NH4(+) + diphosphate. It functions in the pathway pyrimidine metabolism; dUMP biosynthesis; dUMP from dCTP: step 1/1. In terms of biological role, bifunctional enzyme that catalyzes both the deamination of dCTP to dUTP and the hydrolysis of dUTP to dUMP without releasing the toxic dUTP intermediate. The chain is dCTP deaminase, dUMP-forming from Nanoarchaeum equitans (strain Kin4-M).